Consider the following 816-residue polypeptide: Sucrose synthase 1 (816 aa).

The segment at 280–757 is GT-B glycosyltransferase; that stretch reads MVFNVVIMSP…GLQRIEEKYT (478 aa).

It belongs to the glycosyltransferase 1 family. Plant sucrose synthase subfamily. As to quaternary structure, homotetramer or heterotetramer with SUS2. In terms of tissue distribution, expressed in root phloem and leaf mesophyll. Expressed in phloem tissues and aleurone layers of seeds and at lower levels in the pericarp and endosperm cells (at protein level). Predominantly expressed in elongating tissues including roots, developing leaves and internodes.

It catalyses the reaction an NDP-alpha-D-glucose + D-fructose = a ribonucleoside 5'-diphosphate + sucrose + H(+). In terms of biological role, sucrose-cleaving enzyme that provides UDP-glucose and fructose for various metabolic pathways. In Oryza sativa subsp. japonica (Rice), this protein is Sucrose synthase 1 (SUS1).